A 48-amino-acid polypeptide reads, in one-letter code: uncharacterized protein (48 aa).

It is found in the mitochondrion. This is an uncharacterized protein from Emericella nidulans (Aspergillus nidulans).